The following is a 155-amino-acid chain: uncharacterized protein (155 aa).

Residues 1–23 form the signal peptide; the sequence is MKIRSLSRFVLASTMFASFTASA.

It to E.coli YkfB.

This is an uncharacterized protein from Escherichia coli (strain K12).